We begin with the raw amino-acid sequence, 597 residues long: Aspartate--tRNA(Asp/Asn) ligase (597 aa).

An L-aspartate-binding site is contributed by Glu-182. Residues 206 to 209 (QLFK) form an aspartate region. Arg-228 provides a ligand contact to L-aspartate. ATP contacts are provided by residues 228–230 (RDE) and Gln-237. An L-aspartate-binding site is contributed by His-456. Glu-490 is an ATP binding site. Residue Arg-497 coordinates L-aspartate. Residue 542-545 (GFDR) participates in ATP binding.

The protein belongs to the class-II aminoacyl-tRNA synthetase family. Type 1 subfamily. In terms of assembly, homodimer.

The protein localises to the cytoplasm. It carries out the reaction tRNA(Asx) + L-aspartate + ATP = L-aspartyl-tRNA(Asx) + AMP + diphosphate. Functionally, aspartyl-tRNA synthetase with relaxed tRNA specificity since it is able to aspartylate not only its cognate tRNA(Asp) but also tRNA(Asn). Reaction proceeds in two steps: L-aspartate is first activated by ATP to form Asp-AMP and then transferred to the acceptor end of tRNA(Asp/Asn). The chain is Aspartate--tRNA(Asp/Asn) ligase from Desulfatibacillum aliphaticivorans.